Consider the following 478-residue polypeptide: Proline--tRNA ligase (478 aa).

The protein belongs to the class-II aminoacyl-tRNA synthetase family. ProS type 3 subfamily. In terms of assembly, homodimer.

Its subcellular location is the cytoplasm. The catalysed reaction is tRNA(Pro) + L-proline + ATP = L-prolyl-tRNA(Pro) + AMP + diphosphate. In terms of biological role, catalyzes the attachment of proline to tRNA(Pro) in a two-step reaction: proline is first activated by ATP to form Pro-AMP and then transferred to the acceptor end of tRNA(Pro). In Methanoregula boonei (strain DSM 21154 / JCM 14090 / 6A8), this protein is Proline--tRNA ligase.